A 466-amino-acid chain; its full sequence is Cysteine--tRNA ligase (466 aa).

C30 provides a ligand contact to Zn(2+). A 'HIGH' region motif is present at residues 32–42 (PTVYNYIHIGN). 3 residues coordinate Zn(2+): C210, H235, and E239. A 'KMSKS' region motif is present at residues 267-271 (KMSKS). K270 contributes to the ATP binding site. Residue S271 is modified to Phosphoserine.

It belongs to the class-I aminoacyl-tRNA synthetase family. In terms of assembly, monomer. Zn(2+) is required as a cofactor.

The protein resides in the cytoplasm. The enzyme catalyses tRNA(Cys) + L-cysteine + ATP = L-cysteinyl-tRNA(Cys) + AMP + diphosphate. This is Cysteine--tRNA ligase from Geobacillus sp. (strain WCH70).